A 128-amino-acid chain; its full sequence is Large ribosomal subunit protein bL19 (128 aa).

Belongs to the bacterial ribosomal protein bL19 family.

Functionally, this protein is located at the 30S-50S ribosomal subunit interface and may play a role in the structure and function of the aminoacyl-tRNA binding site. In Janthinobacterium sp. (strain Marseille) (Minibacterium massiliensis), this protein is Large ribosomal subunit protein bL19.